The chain runs to 343 residues: Zinc finger protein STP3 (343 aa).

2 disordered regions span residues 31–56 (YNGE…SGSA) and 71–140 (SNDV…KPRK). Polar residues predominate over residues 33–45 (GEASSASTHPTLP). Low complexity-rich tracts occupy residues 46–56 (NMNISNGSGSA), 71–86 (SNDV…FLPS), and 94–120 (SASA…AGPS). 2 positions are modified to phosphoserine: Ser-71 and Ser-111. A C2H2-type zinc finger spans residues 169–191 (HKCPICHRGFARNNDLLRHKKRH). Residues 198–222 (SQSGVLSNHNDGKGGSVSPNDDDTH) form a disordered region.

It localises to the nucleus. This Saccharomyces cerevisiae (strain ATCC 204508 / S288c) (Baker's yeast) protein is Zinc finger protein STP3 (STP3).